Here is a 257-residue protein sequence, read N- to C-terminus: Pyridoxine 5'-phosphate synthase (257 aa).

Asn16 contacts 3-amino-2-oxopropyl phosphate. A 1-deoxy-D-xylulose 5-phosphate-binding site is contributed by Asp18–His19. Position 27 (Arg27) interacts with 3-amino-2-oxopropyl phosphate. His52 serves as the catalytic Proton acceptor. Residues Arg54 and His59 each coordinate 1-deoxy-D-xylulose 5-phosphate. Residue Glu79 is the Proton acceptor of the active site. Thr109 lines the 1-deoxy-D-xylulose 5-phosphate pocket. His200 functions as the Proton donor in the catalytic mechanism. Residues Gly201 and Gly222–His223 each bind 3-amino-2-oxopropyl phosphate.

The protein belongs to the PNP synthase family. As to quaternary structure, homooctamer; tetramer of dimers.

It is found in the cytoplasm. The enzyme catalyses 3-amino-2-oxopropyl phosphate + 1-deoxy-D-xylulose 5-phosphate = pyridoxine 5'-phosphate + phosphate + 2 H2O + H(+). Its pathway is cofactor biosynthesis; pyridoxine 5'-phosphate biosynthesis; pyridoxine 5'-phosphate from D-erythrose 4-phosphate: step 5/5. In terms of biological role, catalyzes the complicated ring closure reaction between the two acyclic compounds 1-deoxy-D-xylulose-5-phosphate (DXP) and 3-amino-2-oxopropyl phosphate (1-amino-acetone-3-phosphate or AAP) to form pyridoxine 5'-phosphate (PNP) and inorganic phosphate. The sequence is that of Pyridoxine 5'-phosphate synthase from Burkholderia pseudomallei (strain 1710b).